The sequence spans 197 residues: Cytochrome c biogenesis ATP-binding export protein CcmA (197 aa).

The region spanning 1-196 (MSMLSLHQLQ…VIKSAQILQL (196 aa)) is the ABC transporter domain. Position 35–42 (35–42 (GANGSGKS)) interacts with ATP.

This sequence belongs to the ABC transporter superfamily. CcmA exporter (TC 3.A.1.107) family. The complex is composed of two ATP-binding proteins (CcmA) and two transmembrane proteins (CcmB).

The protein resides in the cell inner membrane. The enzyme catalyses heme b(in) + ATP + H2O = heme b(out) + ADP + phosphate + H(+). Part of the ABC transporter complex CcmAB involved in the biogenesis of c-type cytochromes; once thought to export heme, this seems not to be the case, but its exact role is uncertain. Responsible for energy coupling to the transport system. In Rickettsia typhi (strain ATCC VR-144 / Wilmington), this protein is Cytochrome c biogenesis ATP-binding export protein CcmA.